Consider the following 223-residue polypeptide: Small ribosomal subunit protein uS3 (223 aa).

Residues 39–108 (IRNFVKKNSY…NILINIVEVK (70 aa)) form the KH type-2 domain.

This sequence belongs to the universal ribosomal protein uS3 family. Part of the 30S ribosomal subunit. Forms a tight complex with proteins S10 and S14.

Functionally, binds the lower part of the 30S subunit head. Binds mRNA in the 70S ribosome, positioning it for translation. The protein is Small ribosomal subunit protein uS3 of Clostridium botulinum (strain Kyoto / Type A2).